A 488-amino-acid chain; its full sequence is UL37 immediate early glycoprotein (488 aa).

An N-terminal signal peptide occupies residues 1–22 (MSPVYVNLLGSVGLLAFWYFSY). Acidic residues predominate over residues 83 to 107 (GEESVTEDTEREDTEEEREDEEEEN). The interval 83–119 (GEESVTEDTEREDTEEEREDEEEENEARTPEVNPMDA) is disordered. 15 N-linked (GlcNAc...) asparagine; by host glycosylation sites follow: asparagine 206, asparagine 210, asparagine 219, asparagine 223, asparagine 242, asparagine 275, asparagine 281, asparagine 294, asparagine 297, asparagine 306, asparagine 333, asparagine 337, asparagine 343, asparagine 384, and asparagine 391. Residues 439-459 (ICTVAAGSIALLSLFCILLIG) traverse the membrane as a helical segment.

Belongs to the immediate early glycoprotein family. In terms of assembly, interacts with host BAX. Interacts with host RSAD2/viperin; this interaction results in RSAD2/viperin relocalization from the endoplasmic reticulum to the mitochondria, actin cytoskeleton disruption and enhancement of infection. Interacts with host PEX19; this interaction inhibits the peroxisomal-dependent antiviral signaling. Interacts with host CHCHD6; this interaction rewires mitochondria by engaging the conserved MICOS complex.

Its subcellular location is the host membrane. It localises to the host endoplasmic reticulum membrane. It is found in the host Golgi apparatus membrane. The protein localises to the host mitochondrion membrane. The protein resides in the host peroxisome. Functionally, multifunctional transmembrane protein that plays several key roles in viral replication. Rapidely traffics from the host endoplasmic reticulum to the outer mitochondrial membrane where it acts to inhibit host immune response, block apoptotic signaling, regulate calcium flux, and induce mitochondrial fragmentation. Sequesters proapoptotic BAX at the outer mitochondrial membrane and prevents cytochrome c release and subsequent initiation of the proapoptotic cascade. Also provoques a calcium efflux from host endoplasmic reticulum and F-actin cytoskeleton disruption. Participates in the increase of host mitochondrial biogenesis, thus promoting viral replication by efficient use of newly made mitochondria. Additionally, a subset of vMIA localizes to peroxisomes, causing fragmentation and blocking peroxisomal MAVS signaling. Mechanistically, inhibits host MAVS oligomerization at peroxisomes in a mitochondrial fission factors (MFF)-dependent manner and in mitochondria independently of mitochondrial fission factors. Plays an essential role in the trafficking of host viperin/RSAD2 from the endoplasmic reticulum to the viral assembly compartment via the mitochondria during viral infection as failure of viperin to localize to the mitochondria results in insufficient lipogenesis and thus reduces viral replication. May play a role in escape from the host antiviral response. The protein is UL37 immediate early glycoprotein (UL37) of Homo sapiens (Human).